Consider the following 101-residue polypeptide: Urease subunit beta (101 aa).

This sequence belongs to the urease beta subunit family. Heterotrimer of UreA (gamma), UreB (beta) and UreC (alpha) subunits. Three heterotrimers associate to form the active enzyme.

The protein localises to the cytoplasm. It carries out the reaction urea + 2 H2O + H(+) = hydrogencarbonate + 2 NH4(+). It participates in nitrogen metabolism; urea degradation; CO(2) and NH(3) from urea (urease route): step 1/1. This is Urease subunit beta from Pseudomonas paraeruginosa (strain DSM 24068 / PA7) (Pseudomonas aeruginosa (strain PA7)).